A 303-amino-acid polypeptide reads, in one-letter code: MENSKIHFSYPLDKSDFKLIEPYTYICESSGKGFRNALIKSFDYWLKVGDEKVQDISKVIQGLHGASLLIDDIEDNSKLRRGKPVAHSIYGIPQTINSANFVYFLIMDQCNKLGDPKATTIFIEELIRLHRGQGYDIFWRDTNTSPSEQEYMNMVNEKTGGLFRLGLRLLQAFSDNNTNYIDLVEDLGMYYQIRDDLINLVSVDYQQNKSFCEDISEGKFSFPIIHAINADSNDNRLLRILKQKTEDRSVKEHALEYIKSKGSLEYTEKKLNVLKEKIIKQINDLGGNPILMKLMESLENSSI.

Residues lysine 32, arginine 35, and histidine 64 each contribute to the isopentenyl diphosphate site. Residues aspartate 71 and aspartate 75 each contribute to the Mg(2+) site. Arginine 80 contributes to the dimethylallyl diphosphate binding site. Residue arginine 81 participates in isopentenyl diphosphate binding. Dimethylallyl diphosphate is bound by residues lysine 158, threonine 159, glutamine 192, lysine 209, and lysine 219.

The protein belongs to the FPP/GGPP synthase family. As to quaternary structure, homooligomer. Mg(2+) serves as cofactor.

The protein localises to the cytoplasm. It carries out the reaction isopentenyl diphosphate + dimethylallyl diphosphate = (2E)-geranyl diphosphate + diphosphate. It catalyses the reaction isopentenyl diphosphate + (2E)-geranyl diphosphate = (2E,6E)-farnesyl diphosphate + diphosphate. The enzyme catalyses isopentenyl diphosphate + (2E,6E)-farnesyl diphosphate = (2E,6E,10E)-geranylgeranyl diphosphate + diphosphate. Its pathway is isoprenoid biosynthesis; farnesyl diphosphate biosynthesis; farnesyl diphosphate from geranyl diphosphate and isopentenyl diphosphate: step 1/1. The protein operates within isoprenoid biosynthesis; geranyl diphosphate biosynthesis; geranyl diphosphate from dimethylallyl diphosphate and isopentenyl diphosphate: step 1/1. It participates in isoprenoid biosynthesis; geranylgeranyl diphosphate biosynthesis; geranylgeranyl diphosphate from farnesyl diphosphate and isopentenyl diphosphate: step 1/1. Functionally, catalyzes the trans-addition of the three molecules of IPP onto DMAPP to form geranylgeranyl pyrophosphate, an important precursor of carotenoids and geranylated proteins. The polypeptide is Geranylgeranyl pyrophosphate synthase (ggps1) (Dictyostelium discoideum (Social amoeba)).